The chain runs to 191 residues: NF-kappa-B inhibitor-interacting Ras-like protein 2 (191 aa).

The segment at 1 to 191 (MGKSCKVVVC…KNKGSGSVDG (191 aa)) is small GTPase-like. 11-18 (GQAAVGKT) contacts GTP. An Effector region motif is present at residues 35-43 (MIETQEDIY). Residues 61–65 (DTRGL) and 120–123 (NKCD) each bind GTP. Residues 170–191 (QPQSKSAFPLSRKNKGSGSVDG) are disordered.

Belongs to the small GTPase superfamily. Ras family. KappaB-Ras subfamily.

The protein localises to the cytoplasm. Its function is as follows. Atypical Ras-like protein that acts as a potent regulator of NF-kappa-B activity by preventing the degradation of NF-kappa-B inhibitor beta (NFKBIB) by most signals, explaining why NFKBIB is more resistant to degradation. This chain is NF-kappa-B inhibitor-interacting Ras-like protein 2 (NKIRAS2), found in Gallus gallus (Chicken).